A 507-amino-acid polypeptide reads, in one-letter code: Light-independent protochlorophyllide reductase subunit B (507 aa).

[4Fe-4S] cluster is bound at residue aspartate 36. Aspartate 293 serves as the catalytic Proton donor. 428–429 (GM) is a substrate binding site.

Belongs to the ChlB/BchB/BchZ family. Protochlorophyllide reductase is composed of three subunits; ChlL, ChlN and ChlB. Forms a heterotetramer of two ChlB and two ChlN subunits. Requires [4Fe-4S] cluster as cofactor.

The protein resides in the plastid. It localises to the chloroplast. It carries out the reaction chlorophyllide a + oxidized 2[4Fe-4S]-[ferredoxin] + 2 ADP + 2 phosphate = protochlorophyllide a + reduced 2[4Fe-4S]-[ferredoxin] + 2 ATP + 2 H2O. It functions in the pathway porphyrin-containing compound metabolism; chlorophyll biosynthesis (light-independent). Functionally, component of the dark-operative protochlorophyllide reductase (DPOR) that uses Mg-ATP and reduced ferredoxin to reduce ring D of protochlorophyllide (Pchlide) to form chlorophyllide a (Chlide). This reaction is light-independent. The NB-protein (ChlN-ChlB) is the catalytic component of the complex. This is Light-independent protochlorophyllide reductase subunit B from Porphyra purpurea (Red seaweed).